Consider the following 266-residue polypeptide: tRNA pseudouridine synthase A (266 aa).

The active-site Nucleophile is the aspartate 57. Residue tyrosine 115 participates in substrate binding.

Belongs to the tRNA pseudouridine synthase TruA family. As to quaternary structure, homodimer.

It catalyses the reaction uridine(38/39/40) in tRNA = pseudouridine(38/39/40) in tRNA. In terms of biological role, formation of pseudouridine at positions 38, 39 and 40 in the anticodon stem and loop of transfer RNAs. This is tRNA pseudouridine synthase A from Buchnera aphidicola subsp. Acyrthosiphon pisum (strain APS) (Acyrthosiphon pisum symbiotic bacterium).